The sequence spans 378 residues: Cytochrome b (378 aa).

4 helical membrane passes run 35-55, 79-101, 114-134, and 180-200; these read FGSLLGLVLSIQLVTGIFLAM, WIIRLVHANGASFFFICLYCHIG, TWIMGVLLFILVMAAAFLGYV, and FFSLHFLVPFLVSLGAMLHIF. Heme b contacts are provided by histidine 85 and histidine 99. 2 residues coordinate heme b: histidine 184 and histidine 198. Histidine 203 serves as a coordination point for a ubiquinone. 4 consecutive transmembrane segments (helical) span residues 226–246, 290–310, 326–346, and 350–370; these read YSAKDLLGFFFMFFFIIFISF, LGGVLGLLCALLVLFSLPLTH, FFWLFIVSFLMLTIGGGQPVC, and VMCSQVWSCLYFTYFILCGPL.

It belongs to the cytochrome b family. The main subunits of complex b-c1 are: cytochrome b, cytochrome c1 and the Rieske protein. The cofactor is heme b.

The protein resides in the mitochondrion inner membrane. Component of the ubiquinol-cytochrome c reductase complex (complex III or cytochrome b-c1 complex) that is part of the mitochondrial respiratory chain. The b-c1 complex mediates electron transfer from ubiquinol to cytochrome c. Contributes to the generation of a proton gradient across the mitochondrial membrane that is then used for ATP synthesis. The polypeptide is Cytochrome b (mt:Cyt-b) (Paraspadella gotoi (Arrow worm)).